The sequence spans 205 residues: Beta-crystallin B2 (205 aa).

Ala2 is subject to N-acetylalanine. The interval 2 to 16 (ASDHQTQAGKPQPLN) is N-terminal arm. Beta/gamma crystallin 'Greek key' domains are found at residues 17 to 56 (PKII…LVQA) and 57 to 101 (GPWV…RPIK). The interval 102–106 (VDSQE) is connecting peptide. Beta/gamma crystallin 'Greek key' domains are found at residues 107–148 (HKII…RVQS) and 149–191 (GTWV…RRIR). The segment at 193-205 (MQWHQRGAFHPSS) is C-terminal arm.

The protein belongs to the beta/gamma-crystallin family. As to quaternary structure, homo/heterodimer, or complexes of higher-order. The structure of beta-crystallin oligomers seems to be stabilized through interactions between the N-terminal arms.

Crystallins are the dominant structural components of the vertebrate eye lens. The polypeptide is Beta-crystallin B2 (CRYBB2) (Mesocricetus auratus (Golden hamster)).